The chain runs to 99 residues: Large ribosomal subunit protein uL23 (99 aa).

Belongs to the universal ribosomal protein uL23 family. In terms of assembly, part of the 50S ribosomal subunit. Contacts protein L29, and trigger factor when it is bound to the ribosome.

Functionally, one of the early assembly proteins it binds 23S rRNA. One of the proteins that surrounds the polypeptide exit tunnel on the outside of the ribosome. Forms the main docking site for trigger factor binding to the ribosome. The polypeptide is Large ribosomal subunit protein uL23 (Hydrogenobaculum sp. (strain Y04AAS1)).